The primary structure comprises 212 residues: Thiamine-phosphate synthase (212 aa).

4-amino-2-methyl-5-(diphosphooxymethyl)pyrimidine is bound by residues 40–44 (QFREK) and Asn-75. Mg(2+) is bound by residues Asp-76 and Asp-95. Residue Ser-113 participates in 4-amino-2-methyl-5-(diphosphooxymethyl)pyrimidine binding. Residue 139–141 (TIS) coordinates 2-[(2R,5Z)-2-carboxy-4-methylthiazol-5(2H)-ylidene]ethyl phosphate. 4-amino-2-methyl-5-(diphosphooxymethyl)pyrimidine is bound at residue Lys-142. 2-[(2R,5Z)-2-carboxy-4-methylthiazol-5(2H)-ylidene]ethyl phosphate contacts are provided by residues Gly-171 and 191–192 (IS).

Belongs to the thiamine-phosphate synthase family. Requires Mg(2+) as cofactor.

It carries out the reaction 2-[(2R,5Z)-2-carboxy-4-methylthiazol-5(2H)-ylidene]ethyl phosphate + 4-amino-2-methyl-5-(diphosphooxymethyl)pyrimidine + 2 H(+) = thiamine phosphate + CO2 + diphosphate. It catalyses the reaction 2-(2-carboxy-4-methylthiazol-5-yl)ethyl phosphate + 4-amino-2-methyl-5-(diphosphooxymethyl)pyrimidine + 2 H(+) = thiamine phosphate + CO2 + diphosphate. The enzyme catalyses 4-methyl-5-(2-phosphooxyethyl)-thiazole + 4-amino-2-methyl-5-(diphosphooxymethyl)pyrimidine + H(+) = thiamine phosphate + diphosphate. Its pathway is cofactor biosynthesis; thiamine diphosphate biosynthesis; thiamine phosphate from 4-amino-2-methyl-5-diphosphomethylpyrimidine and 4-methyl-5-(2-phosphoethyl)-thiazole: step 1/1. Functionally, condenses 4-methyl-5-(beta-hydroxyethyl)thiazole monophosphate (THZ-P) and 2-methyl-4-amino-5-hydroxymethyl pyrimidine pyrophosphate (HMP-PP) to form thiamine monophosphate (TMP). This chain is Thiamine-phosphate synthase, found in Staphylococcus haemolyticus (strain JCSC1435).